The sequence spans 187 residues: GMP synthase [glutamine-hydrolyzing] subunit A (187 aa).

One can recognise a Glutamine amidotransferase type-1 domain in the interval 1–187 (MILIIDNHGQ…KNFAKLCGEL (187 aa)). Catalysis depends on Cys-76, which acts as the Nucleophile. Catalysis depends on residues His-164 and Glu-166.

Heterodimer composed of a glutamine amidotransferase subunit (A) and a GMP-binding subunit (B).

The catalysed reaction is XMP + L-glutamine + ATP + H2O = GMP + L-glutamate + AMP + diphosphate + 2 H(+). It participates in purine metabolism; GMP biosynthesis; GMP from XMP (L-Gln route): step 1/1. Functionally, catalyzes the synthesis of GMP from XMP. The chain is GMP synthase [glutamine-hydrolyzing] subunit A from Methanopyrus kandleri (strain AV19 / DSM 6324 / JCM 9639 / NBRC 100938).